Consider the following 118-residue polypeptide: Aspartate 1-decarboxylase 1 (118 aa).

The active-site Schiff-base intermediate with substrate; via pyruvic acid is Ser-25. Residue Ser-25 is modified to Pyruvic acid (Ser). Position 57 (Thr-57) interacts with substrate. Tyr-58 serves as the catalytic Proton donor. A substrate-binding site is contributed by 73–75 (GAA).

This sequence belongs to the PanD family. As to quaternary structure, heterooctamer of four alpha and four beta subunits. Pyruvate is required as a cofactor. In terms of processing, is synthesized initially as an inactive proenzyme, which is activated by self-cleavage at a specific serine bond to produce a beta-subunit with a hydroxyl group at its C-terminus and an alpha-subunit with a pyruvoyl group at its N-terminus.

It localises to the cytoplasm. The catalysed reaction is L-aspartate + H(+) = beta-alanine + CO2. It participates in cofactor biosynthesis; (R)-pantothenate biosynthesis; beta-alanine from L-aspartate: step 1/1. Functionally, catalyzes the pyruvoyl-dependent decarboxylation of aspartate to produce beta-alanine. The chain is Aspartate 1-decarboxylase 1 from Gloeobacter violaceus (strain ATCC 29082 / PCC 7421).